A 226-amino-acid chain; its full sequence is 2-C-methyl-D-erythritol 4-phosphate cytidylyltransferase (226 aa).

The protein belongs to the IspD/TarI cytidylyltransferase family. IspD subfamily.

The enzyme catalyses 2-C-methyl-D-erythritol 4-phosphate + CTP + H(+) = 4-CDP-2-C-methyl-D-erythritol + diphosphate. It participates in isoprenoid biosynthesis; isopentenyl diphosphate biosynthesis via DXP pathway; isopentenyl diphosphate from 1-deoxy-D-xylulose 5-phosphate: step 2/6. Catalyzes the formation of 4-diphosphocytidyl-2-C-methyl-D-erythritol from CTP and 2-C-methyl-D-erythritol 4-phosphate (MEP). The protein is 2-C-methyl-D-erythritol 4-phosphate cytidylyltransferase of Parasynechococcus marenigrum (strain WH8102).